A 252-amino-acid chain; its full sequence is tRNA (guanine-N(1)-)-methyltransferase (252 aa).

S-adenosyl-L-methionine is bound by residues G113 and 133-138 (IGDYVL).

The protein belongs to the RNA methyltransferase TrmD family. In terms of assembly, homodimer.

The protein resides in the cytoplasm. The enzyme catalyses guanosine(37) in tRNA + S-adenosyl-L-methionine = N(1)-methylguanosine(37) in tRNA + S-adenosyl-L-homocysteine + H(+). In terms of biological role, specifically methylates guanosine-37 in various tRNAs. The chain is tRNA (guanine-N(1)-)-methyltransferase from Nitrosococcus oceani (strain ATCC 19707 / BCRC 17464 / JCM 30415 / NCIMB 11848 / C-107).